The sequence spans 638 residues: 1-deoxy-D-xylulose-5-phosphate synthase (638 aa).

Residues His78 and 119–121 (GHS) each bind thiamine diphosphate. Residue Asp151 participates in Mg(2+) binding. Residues 152–153 (GA), Asn180, Tyr289, and Glu371 each bind thiamine diphosphate. Residue Asn180 participates in Mg(2+) binding.

The protein belongs to the transketolase family. DXPS subfamily. In terms of assembly, homodimer. Mg(2+) serves as cofactor. It depends on thiamine diphosphate as a cofactor.

It carries out the reaction D-glyceraldehyde 3-phosphate + pyruvate + H(+) = 1-deoxy-D-xylulose 5-phosphate + CO2. It participates in metabolic intermediate biosynthesis; 1-deoxy-D-xylulose 5-phosphate biosynthesis; 1-deoxy-D-xylulose 5-phosphate from D-glyceraldehyde 3-phosphate and pyruvate: step 1/1. Its function is as follows. Catalyzes the acyloin condensation reaction between C atoms 2 and 3 of pyruvate and glyceraldehyde 3-phosphate to yield 1-deoxy-D-xylulose-5-phosphate (DXP). The sequence is that of 1-deoxy-D-xylulose-5-phosphate synthase from Bartonella bacilliformis (strain ATCC 35685 / KC583 / Herrer 020/F12,63).